The sequence spans 575 residues: 2-isopropylmalate synthase (575 aa).

A Pyruvate carboxyltransferase domain is found at 31-305 (PTWLSTDLRD…APGLDFSDIA (275 aa)). Aspartate 40, histidine 244, histidine 246, and asparagine 280 together coordinate Mg(2+). The interval 437-575 (PVQASPDFSD…RFAGEEQGKG (139 aa)) is regulatory domain.

It belongs to the alpha-IPM synthase/homocitrate synthase family. LeuA type 2 subfamily. As to quaternary structure, homodimer. Mg(2+) serves as cofactor.

The protein localises to the cytoplasm. It carries out the reaction 3-methyl-2-oxobutanoate + acetyl-CoA + H2O = (2S)-2-isopropylmalate + CoA + H(+). It functions in the pathway amino-acid biosynthesis; L-leucine biosynthesis; L-leucine from 3-methyl-2-oxobutanoate: step 1/4. In terms of biological role, catalyzes the condensation of the acetyl group of acetyl-CoA with 3-methyl-2-oxobutanoate (2-ketoisovalerate) to form 3-carboxy-3-hydroxy-4-methylpentanoate (2-isopropylmalate). The sequence is that of 2-isopropylmalate synthase from Herbaspirillum seropedicae (strain SmR1).